The primary structure comprises 694 residues: MANKREYPLEKTRNIGIMAHIDAGKTTATERILYYTGKIHKIGETHDGASQMDWMEEEKERGITITSAATTAVWKDTRINIIDTPGHVDFTVEVERALRVLDGAVTVLDAQAGVEPQTETVWRQADDFNVPRLVFANKMDKMGANFDYSVKTIKERLNVTPLPIQMPIGAEDEFAGVIDLVKMVAYIYDEDKLGENWDTVEIPADMKDEAESRHDAMIETLADVNDDIMEKYLEGAEISVDEIKAAIRQATLDQELFPVMAGSAYKDKGIQMMLDAVLDYLPSPVDVKPFVAHDEEGNAIELTAGDDKPFAALAFKIATDPFVGRLTFLRVYTGSLKSGSYVLNATKGKRERIGRLLQMHSNQQNEISEVFSGDIAAAIGLKNTTTGDSLTDPDHPLQLESMDFPEPVIQVSVEPKSKADQDKMDKGLQKLAEEDPTFKAETNPETGETLIAGMGELHLDIIVERLRREFNAEVTVGKPQVSYREAFTKQVSAQGKFVRQSGGKGQYGDVWIEFTPLEEGAGFEFEDAIVGGVVPREYIPAVEQGLKEAMENGVLAGYPLVDLHAKLYDGSYHEVDSSEAAFKVAASLALRNAAPKGGAVILEPIMKVDIVAPEDNLGDVMGHVTARRGSIDGMEERGNAQLVHSFVPLSEMFGYATTLRSATQGRGTFTMTFDHYSAVPKSIQEEIIEKNGGK.

Residues 10-285 (EKTRNIGIMA…AVLDYLPSPV (276 aa)) form the tr-type G domain. Residues 19-26 (AHIDAGKT), 83-87 (DTPGH), and 137-140 (NKMD) contribute to the GTP site.

This sequence belongs to the TRAFAC class translation factor GTPase superfamily. Classic translation factor GTPase family. EF-G/EF-2 subfamily.

It localises to the cytoplasm. Catalyzes the GTP-dependent ribosomal translocation step during translation elongation. During this step, the ribosome changes from the pre-translocational (PRE) to the post-translocational (POST) state as the newly formed A-site-bound peptidyl-tRNA and P-site-bound deacylated tRNA move to the P and E sites, respectively. Catalyzes the coordinated movement of the two tRNA molecules, the mRNA and conformational changes in the ribosome. The protein is Elongation factor G of Limosilactobacillus fermentum (strain NBRC 3956 / LMG 18251) (Lactobacillus fermentum).